Consider the following 353-residue polypeptide: Putative permease PerM (353 aa).

The next 7 membrane-spanning stretches (helical) occupy residues 19–39 (IALL…SGLL), 72–92 (IVLV…LPIA), 156–176 (LVGL…VFFL), 217–237 (VLEM…FGLN), 240–260 (LLLA…AFVV), 281–301 (CFAV…PVLF), and 310–330 (LVII…GVFF).

It belongs to the autoinducer-2 exporter (AI-2E) (TC 2.A.86) family.

Its subcellular location is the cell membrane. In Escherichia coli O157:H7, this protein is Putative permease PerM (perM).